We begin with the raw amino-acid sequence, 20 residues long: Phospholipase A2 homolog P-elapitoxin-Aa1a gamma chain (20 aa).

The protein belongs to the phospholipase A2 family. Group I subfamily. In terms of assembly, heterotrimer of alpha, beta and gamma chains, each related to PLA2. In terms of processing, glycosylated. As to expression, expressed by the venom gland.

It is found in the secreted. Functionally, heterotrimer: Snake venom phospholipase A2 (PLA2) that has presynaptic neurotoxicity. Inhibits nerve-evoked twitch contractions but not responses to cholinergic agonists acetylcholine and carbachol and to depolarizing agonist KCl. Causes a fade in tetanic contractions. Displays a triphasic mode of action with depression, enhancement and blockade of neurotransmission. Does not display myotoxic activity such as changes in baseline muscle tension or inhibition of directly stimulated muscle twitches. All subunits are necessary for maximum toxicity. In terms of biological role, monomer: the gamma chain has no significant enzymatic activity and is not toxic by itself. This Acanthophis antarcticus (Common death adder) protein is Phospholipase A2 homolog P-elapitoxin-Aa1a gamma chain.